Consider the following 62-residue polypeptide: DNA-directed RNA polymerase subunit Rpo10 (62 aa).

Cys-6, Cys-9, Cys-43, and Cys-44 together coordinate Zn(2+).

It belongs to the archaeal Rpo10/eukaryotic RPB10 RNA polymerase subunit family. In terms of assembly, part of the RNA polymerase complex. The cofactor is Zn(2+).

The protein resides in the cytoplasm. It carries out the reaction RNA(n) + a ribonucleoside 5'-triphosphate = RNA(n+1) + diphosphate. Its function is as follows. DNA-dependent RNA polymerase (RNAP) catalyzes the transcription of DNA into RNA using the four ribonucleoside triphosphates as substrates. This chain is DNA-directed RNA polymerase subunit Rpo10, found in Methanosarcina mazei (strain ATCC BAA-159 / DSM 3647 / Goe1 / Go1 / JCM 11833 / OCM 88) (Methanosarcina frisia).